Consider the following 196-residue polypeptide: Holliday junction branch migration complex subunit RuvA (196 aa).

Residues methionine 1 to alanine 63 are domain I. Positions glutamate 64–proline 142 are domain II. The tract at residues proline 142–valine 146 is flexible linker. Residues serine 147–leucine 196 form a domain III region.

This sequence belongs to the RuvA family. In terms of assembly, homotetramer. Forms an RuvA(8)-RuvB(12)-Holliday junction (HJ) complex. HJ DNA is sandwiched between 2 RuvA tetramers; dsDNA enters through RuvA and exits via RuvB. An RuvB hexamer assembles on each DNA strand where it exits the tetramer. Each RuvB hexamer is contacted by two RuvA subunits (via domain III) on 2 adjacent RuvB subunits; this complex drives branch migration. In the full resolvosome a probable DNA-RuvA(4)-RuvB(12)-RuvC(2) complex forms which resolves the HJ.

The protein localises to the cytoplasm. Functionally, the RuvA-RuvB-RuvC complex processes Holliday junction (HJ) DNA during genetic recombination and DNA repair, while the RuvA-RuvB complex plays an important role in the rescue of blocked DNA replication forks via replication fork reversal (RFR). RuvA specifically binds to HJ cruciform DNA, conferring on it an open structure. The RuvB hexamer acts as an ATP-dependent pump, pulling dsDNA into and through the RuvAB complex. HJ branch migration allows RuvC to scan DNA until it finds its consensus sequence, where it cleaves and resolves the cruciform DNA. This is Holliday junction branch migration complex subunit RuvA from Parabacteroides distasonis (strain ATCC 8503 / DSM 20701 / CIP 104284 / JCM 5825 / NCTC 11152).